Reading from the N-terminus, the 751-residue chain is uncharacterized protein (751 aa).

The interval 73-169 is disordered; the sequence is FGVVHSHTPK…PVLIDDDTGE (97 aa). Residues 96–109 show a composition bias toward low complexity; that stretch reads ATSTRRSATAQRAA. Residues 111–120 show a composition bias toward polar residues; that stretch reads LKSSPVDQWS.

This is an uncharacterized protein from Invertebrate iridescent virus 3 (IIV-3).